The chain runs to 446 residues: Baeyer-Villiger monooxygenase dmxR6 (446 aa).

The protein belongs to the AflY oxidoreductase family.

Its pathway is secondary metabolite biosynthesis. Baeyer-Villiger monooxygenase; part of the gene cluster that mediates the biosynthesis of the dimeric xanthones cryptosporioptides. The pathway begins with the synthesis of atrochrysone thioester by the polyketide synthase dmx-nrPKS. The atrochrysone carboxyl ACP thioesterase dmxR1 then breaks the thioester bond and releases the atrochrysone carboxylic acid from dmx-nrPKS. Atrochrysone carboxylic acid is decarboxylated by the decarboxylase dmxR15, and oxidized by the anthrone oxygenase dmxR16 to yield emodin. Emodin is then reduced to emodin hydroquinone by the oxidoreductase dmxR7. A-ring reduction by the short chain dehydrogenase dmxR18, dehydration by the scytalone dehydratase-like protein dmxR17 and probable spontaneous re-oxidation, results in overall deoxygenation to chrysophanol. Baeyer-Villiger oxidation by the Baeyer-Villiger monooxygenase (BVMO) dmxR6 then yields monodictylactone in equilibrium with monodictyphenone. In the case of the cryptosporioptides biosynthesis, monodictylactone is reduced at C-12 to an alcohol (by the short chain dehydrogenases dmxR12 or dmxR8) and hydroxylated at C-5 by dmxR9, yielding the electron-rich aromatic which could eliminate H(2)O to form the ortho-quinonemethide, followed by tautomerisation to paraquinone and complete the formal reduction to produce the 10-methylgroup. Conjugate addition of C-4a-OH to the resulting paraquinone by the monooxygenase dmxR10 then gives cyclohexadienone, which is then reduced at C-5 by the short chain dehydrogenase dmxR3 to give the dihydroxanthone. The 6,7-epoxide in the cryptosporioptides could be introduced by the cytochrome P450 monooxygenase dmxL3. The highly reducing PKS dmxL2 manufactures butyrate, which is further carboxylated by dmxL1 to form ethylmalonate. It is not yet clear whether the carboxylation occurs while the butyrate is attached to the ACP of dmxL2, but this unusual fungal metabolite could then be esterified to O-5 by the O-acetyltransferase dmxR13. Finally, dimerization performed by dmxR5 gives the observed dimers cryptosporioptides A, B and C as the final products of the pathway. In Cryptosporiopsis sp. (strain 8999), this protein is Baeyer-Villiger monooxygenase dmxR6.